A 336-amino-acid polypeptide reads, in one-letter code: Glycerol-3-phosphate dehydrogenase [NAD(P)+] (336 aa).

Positions 16, 17, 37, and 111 each coordinate NADPH. 3 residues coordinate sn-glycerol 3-phosphate: Lys111, Gly140, and Thr142. Ala144 provides a ligand contact to NADPH. Residues Lys196, Asp249, Ser259, Arg260, and Asn261 each contribute to the sn-glycerol 3-phosphate site. Residue Lys196 is the Proton acceptor of the active site. Arg260 provides a ligand contact to NADPH. NADPH is bound by residues Val284 and Glu286.

This sequence belongs to the NAD-dependent glycerol-3-phosphate dehydrogenase family.

The protein resides in the cytoplasm. The catalysed reaction is sn-glycerol 3-phosphate + NAD(+) = dihydroxyacetone phosphate + NADH + H(+). It carries out the reaction sn-glycerol 3-phosphate + NADP(+) = dihydroxyacetone phosphate + NADPH + H(+). It functions in the pathway membrane lipid metabolism; glycerophospholipid metabolism. In terms of biological role, catalyzes the reduction of the glycolytic intermediate dihydroxyacetone phosphate (DHAP) to sn-glycerol 3-phosphate (G3P), the key precursor for phospholipid synthesis. The sequence is that of Glycerol-3-phosphate dehydrogenase [NAD(P)+] from Actinobacillus pleuropneumoniae serotype 3 (strain JL03).